Reading from the N-terminus, the 229-residue chain is Large ribosomal subunit protein bL19cy (229 aa).

Residues 1–70 (MATSSHLLPQ…DSKKRKEFIA (70 aa)) constitute a chloroplast transit peptide.

It belongs to the bacterial ribosomal protein bL19 family. In terms of assembly, part of the 50S ribosomal subunit.

Its subcellular location is the plastid. It is found in the chloroplast. In terms of biological role, located at the 30S-50S ribosomal subunit interface and binds directly to 23S ribosomal RNA. The protein is Large ribosomal subunit protein bL19cy of Arabidopsis thaliana (Mouse-ear cress).